Here is a 257-residue protein sequence, read N- to C-terminus: Ribonuclease HIII (257 aa).

The region spanning Lys-71 to Val-257 is the RNase H type-2 domain. Residues Asp-77, Glu-78, and Asp-179 each coordinate a divalent metal cation.

The protein belongs to the RNase HII family. RnhC subfamily. It depends on Mn(2+) as a cofactor. The cofactor is Mg(2+).

It localises to the cytoplasm. It carries out the reaction Endonucleolytic cleavage to 5'-phosphomonoester.. Its function is as follows. Endonuclease that specifically degrades the RNA of RNA-DNA hybrids. The polypeptide is Ribonuclease HIII (rnhC) (Aquifex aeolicus (strain VF5)).